Consider the following 337-residue polypeptide: Fructose-1,6-bisphosphatase class 1 (337 aa).

Residues Glu89, Asp112, Leu114, and Asp115 each contribute to the Mg(2+) site. Substrate is bound by residues 115 to 118, Asn208, Tyr241, and Lys271; that span reads DGSS. Glu277 is a binding site for Mg(2+).

This sequence belongs to the FBPase class 1 family. As to quaternary structure, homotetramer. Requires Mg(2+) as cofactor.

It is found in the cytoplasm. The catalysed reaction is beta-D-fructose 1,6-bisphosphate + H2O = beta-D-fructose 6-phosphate + phosphate. It participates in carbohydrate biosynthesis; gluconeogenesis. This is Fructose-1,6-bisphosphatase class 1 from Psychromonas ingrahamii (strain DSM 17664 / CCUG 51855 / 37).